The primary structure comprises 631 residues: Sphingomyelin phosphodiesterase (631 aa).

A disordered region spans residues M1–G23. A signal peptide spans M1–A46. A Saposin B-type domain is found at G87–D171. N-linked (GlcNAc...) asparagine glycosylation occurs at N88. Cystine bridges form between C91/C167, C94/C159, and C122/C133. N-linked (GlcNAc...) asparagine glycosylation is present at N177. Positions 208 and 210 each coordinate Zn(2+). 2 disulfide bridges follow: C223-C228 and C229-C252. Positions 280 and 320 each coordinate Zn(2+). N-linked (GlcNAc...) asparagine glycosylation is found at N337 and N397. C387 and C433 are joined by a disulfide. Zn(2+)-binding residues include H427, H459, and H461. N505 is a glycosylation site (N-linked (GlcNAc...) asparagine). Position 510 is a phosphoserine; by PKC/PRKCD (S510). N-linked (GlcNAc...) asparagine glycosylation is present at N522. Disulfide bonds link C586-C590 and C596-C609.

This sequence belongs to the acid sphingomyelinase family. In terms of assembly, monomer. Interacts with SORT1; the interaction is required for SMPD1 targeting to lysosomes. Zn(2+) is required as a cofactor. Post-translationally, proteolytically processed. Mature lysosomal form arises from C-terminal proteolytic processing of pro-sphingomyelin phosphodiesterase. In terms of processing, this form is generated following cleavage by CASP7 in the extracellular milieu. It shows increased activity. Both lysosomal and secreted forms are glycosylated but they show a differential pattern of glycosylation. Post-translationally, phosphorylated at Ser-510 by PRKCD upon stress stimuli. Phosphorylation is required for secretion.

It localises to the lysosome. Its subcellular location is the lipid droplet. The protein localises to the secreted. It is found in the extracellular space. It carries out the reaction a sphingomyelin + H2O = phosphocholine + an N-acylsphing-4-enine + H(+). The enzyme catalyses N-(octadecanoyl)-sphing-4-enine-1-phosphocholine + H2O = N-octadecanoylsphing-4-enine + phosphocholine + H(+). The catalysed reaction is 1,2-dihexadecanoyl-sn-glycero-3-phosphocholine + H2O = 1,2-dihexadecanoyl-sn-glycerol + phosphocholine + H(+). It catalyses the reaction a 1,2-diacyl-sn-glycero-3-phosphocholine + H2O = phosphocholine + a 1,2-diacyl-sn-glycerol + H(+). Its activity is regulated as follows. Hydrolysis of liposomal sphingomyelin is stimulated by incorporation of diacylglycerol (DAG), ceramide and free fatty acids into the liposomal membranes. Phosphatidylcholine hydrolysis is inhibited by incorporation of cholesterol, ceramide, DAG, monoacylglycerol and fatty acids. Antidepressants, namely amitriptyline, imipramine, desipramine, fluoxetine, sertraline, escitalopram, and maprotiline inhibit sphingomyelin phosphodiesterase activity. (Microbial infection) The secretory form is activated by P.aeruginosa, this activation results in the release of ceramide in the outer leaflet of the plasma membrane. With respect to regulation, (Microbial infection) The secretory form is activated by human coronavirus SARS-CoV-2, this activation results in the release of ceramide in the outer leaflet of the plasma membrane. In terms of biological role, converts sphingomyelin to ceramide. Exists as two enzymatic forms that arise from alternative trafficking of a single protein precursor, one that is targeted to the endolysosomal compartment, whereas the other is released extracellularly. However, in response to various forms of stress, lysosomal exocytosis may represent a major source of the secretory form. Its function is as follows. In the lysosomes, converts sphingomyelin to ceramide. Plays an important role in the export of cholesterol from the intraendolysosomal membranes. Also has phospholipase C activities toward 1,2-diacylglycerolphosphocholine and 1,2-diacylglycerolphosphoglycerol. Modulates stress-induced apoptosis through the production of ceramide. Functionally, when secreted, modulates cell signaling with its ability to reorganize the plasma membrane by converting sphingomyelin to ceramide. Secreted form is increased in response to stress and inflammatory mediators such as IL1B, IFNG or TNF as well as upon infection with bacteria and viruses. Produces the release of ceramide in the outer leaflet of the plasma membrane playing a central role in host defense. Ceramide reorganizes these rafts into larger signaling platforms that are required to internalize P.aeruginosa, induce apoptosis and regulate the cytokine response in infected cells. In wounded cells, the lysosomal form is released extracellularly in the presence of Ca(2+) and promotes endocytosis and plasma membrane repair. This form is generated following cleavage by CASP7 in the extracellular milieu in response to bacterial infection. It shows increased ability to convert sphingomyelin to ceramide and promotes plasma membrane repair. Plasma membrane repair by ceramide counteracts the action of gasdermin-D (GSDMD) perforin (PRF1) pores that are formed in response to bacterial infection. In terms of biological role, (Microbial infection) Secretion is activated by bacteria such as P.aeruginosa, N.gonorrhoeae and others, this activation results in the release of ceramide in the outer leaflet of the plasma membrane which facilitates the infection. Its function is as follows. (Microbial infection) Secretion is activated by human coronaviruses SARS-CoV and SARS-CoV-2 as well as Zaire ebolavirus, this activation results in the release of ceramide in the outer leaflet of the plasma membrane which facilitates the infection. Functionally, lacks residues that bind the cofactor Zn(2+) and has no enzyme activity. This Homo sapiens (Human) protein is Sphingomyelin phosphodiesterase.